The chain runs to 261 residues: uncharacterized protein (261 aa).

The N-terminal stretch at 1–22 (MIHSKKLTLGICLVLLIILIGG) is a signal peptide. Cys-23 is lipidated: N-palmitoyl cysteine. Cys-23 carries the S-diacylglycerol cysteine lipid modification.

It belongs to the staphylococcal tandem lipoprotein family.

It localises to the cell membrane. This is an uncharacterized protein from Staphylococcus aureus (strain NCTC 8325 / PS 47).